The sequence spans 299 residues: Putative pyrroline-5-carboxylate reductase 4 (299 aa).

It belongs to the pyrroline-5-carboxylate reductase family.

The catalysed reaction is L-proline + NADP(+) = (S)-1-pyrroline-5-carboxylate + NADPH + 2 H(+). It catalyses the reaction L-proline + NAD(+) = (S)-1-pyrroline-5-carboxylate + NADH + 2 H(+). It participates in amino-acid biosynthesis; L-proline biosynthesis; L-proline from L-glutamate 5-semialdehyde: step 1/1. This chain is Putative pyrroline-5-carboxylate reductase 4, found in Caenorhabditis elegans.